The chain runs to 299 residues: tRNA dimethylallyltransferase (299 aa).

An ATP-binding site is contributed by 10–17; the sequence is GPTAVGKT. 12 to 17 contributes to the substrate binding site; it reads TAVGKT. Residues 35 to 38 are interaction with substrate tRNA; it reads DSQQ.

The protein belongs to the IPP transferase family. Monomer. Mg(2+) is required as a cofactor.

The catalysed reaction is adenosine(37) in tRNA + dimethylallyl diphosphate = N(6)-dimethylallyladenosine(37) in tRNA + diphosphate. Functionally, catalyzes the transfer of a dimethylallyl group onto the adenine at position 37 in tRNAs that read codons beginning with uridine, leading to the formation of N6-(dimethylallyl)adenosine (i(6)A). This chain is tRNA dimethylallyltransferase, found in Streptococcus thermophilus (strain ATCC BAA-250 / LMG 18311).